Here is a 240-residue protein sequence, read N- to C-terminus: Protein unc-119 homolog A (240 aa).

Over residues 1–12 (MKVKKGGGGTGP) the composition is skewed to gly residues. Positions 1–62 (MKVKKGGGGT…PLQGKQPIGP (62 aa)) are disordered. Phosphoserine; by CK2 is present on residues S37, S39, and S41. Residue Y131 participates in tetradecanoate binding.

Belongs to the PDE6D/unc-119 family. As to quaternary structure, interacts with CABP4; in the absence of calcium. May interact with GTP-bound ARL1. Interacts with ARL2 and ARL3 (GTP-bound forms); this promotes the release of myristoylated cargo proteins. Found in a complex with ARL3, RP2 and UNC119; RP2 induces hydrolysis of GTP ARL3 in the complex, leading to the release of UNC119. Interacts with NPHP3 (when myristoylated). Interacts with CYS1 (when myristoylated). Interacts with MACIR; interaction only takes place when UNC119 is not liganded with myristoylated proteins. Interacts with ARL1 and ARL3 GTP-bound forms. Interacts with ARL2. Interacts with ARL2. Interacts with LCK; this interaction plays a crucial role in activation of LCK. Interacts with FYN. Interacts with RAB11A; in a cell cycle-dependent manner. Interacts with LYN (via SH2 and SH3 domains); leading to LYN activation. Interacts with DNM1; leading to a decrease of DNM1 GTPase activity. Found in a complex with ABL1, ABL2, CRK and UNC119; leading to the inhibition of CRK phosphorylation by ABL kinases. Interacts with CD44. Interacts with KLHL18 (via kelch repeats). Interacts with PPP3CA, PPP3CB and PPP3CC. Interacts with USP48; this interaction promotes UNC119 stability. Post-translationally, phosphorylation suppresses its interaction with KLHL18 and down-regulates its KLHL18-mediated degradation. Phosphorylated more under light conditions than dark conditions. Dephosphorylated by calcineurin.

Its subcellular location is the cytoplasm. The protein localises to the cytoskeleton. The protein resides in the microtubule organizing center. It is found in the centrosome. It localises to the spindle. Its subcellular location is the spindle pole. Its function is as follows. Involved in synaptic functions in photoreceptor cells, the signal transduction in immune cells as a Src family kinase activator, endosome recycling, the uptake of bacteria and endocytosis, protein trafficking in sensory neurons and as lipid-binding chaperone with specificity for a diverse subset of myristoylated proteins. Specifically binds the myristoyl moiety of a subset of N-terminally myristoylated proteins and is required for their localization. Binds myristoylated GNAT1 and is required for G-protein localization and trafficking in sensory neurons. Probably plays a role in trafficking proteins in photoreceptor cells. Plays important roles in mediating Src family kinase signals for the completion of cytokinesis via RAB11A. This chain is Protein unc-119 homolog A (Unc119), found in Rattus norvegicus (Rat).